Here is a 213-residue protein sequence, read N- to C-terminus: Orotate phosphoribosyltransferase (213 aa).

Lys26 contacts 5-phospho-alpha-D-ribose 1-diphosphate. 34 to 35 is a binding site for orotate; the sequence is FF. Residues 72 to 73, Arg99, Lys100, Lys103, His105, and 124 to 132 contribute to the 5-phospho-alpha-D-ribose 1-diphosphate site; these read YK and DDVITAGTA. Residues Thr128 and Arg156 each coordinate orotate.

This sequence belongs to the purine/pyrimidine phosphoribosyltransferase family. PyrE subfamily. Homodimer. It depends on Mg(2+) as a cofactor.

It catalyses the reaction orotidine 5'-phosphate + diphosphate = orotate + 5-phospho-alpha-D-ribose 1-diphosphate. It participates in pyrimidine metabolism; UMP biosynthesis via de novo pathway; UMP from orotate: step 1/2. Its function is as follows. Catalyzes the transfer of a ribosyl phosphate group from 5-phosphoribose 1-diphosphate to orotate, leading to the formation of orotidine monophosphate (OMP). The protein is Orotate phosphoribosyltransferase of Escherichia coli O127:H6 (strain E2348/69 / EPEC).